The primary structure comprises 691 residues: Probable E3 ubiquitin-protein ligase RHG1A (691 aa).

Disordered stretches follow at residues 71 to 91 (SLGE…NEQR), 151 to 235 (GPGT…PRGM), 316 to 336 (SFVV…GSRT), 349 to 373 (VGGT…SRSI), and 395 to 501 (QSSR…MHNR). Residues 80-91 (TKDEASSHNEQR) show a composition bias toward basic and acidic residues. Composition is skewed to polar residues over residues 204-213 (GESSSWTPGS) and 317-328 (FVVSRNPNSTPV). The segment covering 361–370 (RNLHLDETRS) has biased composition (basic and acidic residues). The segment covering 395-406 (QSSRNVTNGNLN) has biased composition (polar residues). Residues 407–419 (SASSVSRTGSTTS) are compositionally biased toward low complexity. The span at 429–440 (NLAWTSYQNSPH) shows a compositional bias: polar residues. The span at 454 to 465 (RSLLSSLAADAT) shows a compositional bias: low complexity. The RING-type; atypical zinc-finger motif lies at 637 to 678 (CCVCQEEYTEGEDMGTLECGHEFHSQCIKEWLKQKNLCPICK).

Expressed in stems, flowers, green siliques, cauline leaves, seeds and roots.

It carries out the reaction S-ubiquitinyl-[E2 ubiquitin-conjugating enzyme]-L-cysteine + [acceptor protein]-L-lysine = [E2 ubiquitin-conjugating enzyme]-L-cysteine + N(6)-ubiquitinyl-[acceptor protein]-L-lysine.. It functions in the pathway protein modification; protein ubiquitination. In terms of biological role, probable E3 ubiquitin-protein ligase that may possess E3 ubiquitin ligase activity in vitro. This chain is Probable E3 ubiquitin-protein ligase RHG1A, found in Arabidopsis thaliana (Mouse-ear cress).